The chain runs to 342 residues: Holliday junction branch migration complex subunit RuvB (342 aa).

Positions 4 to 182 (TDRLLSAGRR…FGIPIRLQFY (179 aa)) are large ATPase domain (RuvB-L). 9 residues coordinate ATP: L21, R22, G63, K66, T67, T68, R172, Y182, and R219. T67 contributes to the Mg(2+) binding site. The small ATPAse domain (RuvB-S) stretch occupies residues 183–253 (TVEELERVVS…VADQSLNRLE (71 aa)). The tract at residues 256-342 (NLGLDAMDRR…EAGQDGLFDV (87 aa)) is head domain (RuvB-H). DNA-binding residues include R292, R311, and R316.

It belongs to the RuvB family. Homohexamer. Forms an RuvA(8)-RuvB(12)-Holliday junction (HJ) complex. HJ DNA is sandwiched between 2 RuvA tetramers; dsDNA enters through RuvA and exits via RuvB. An RuvB hexamer assembles on each DNA strand where it exits the tetramer. Each RuvB hexamer is contacted by two RuvA subunits (via domain III) on 2 adjacent RuvB subunits; this complex drives branch migration. In the full resolvosome a probable DNA-RuvA(4)-RuvB(12)-RuvC(2) complex forms which resolves the HJ.

It is found in the cytoplasm. It catalyses the reaction ATP + H2O = ADP + phosphate + H(+). Functionally, the RuvA-RuvB-RuvC complex processes Holliday junction (HJ) DNA during genetic recombination and DNA repair, while the RuvA-RuvB complex plays an important role in the rescue of blocked DNA replication forks via replication fork reversal (RFR). RuvA specifically binds to HJ cruciform DNA, conferring on it an open structure. The RuvB hexamer acts as an ATP-dependent pump, pulling dsDNA into and through the RuvAB complex. RuvB forms 2 homohexamers on either side of HJ DNA bound by 1 or 2 RuvA tetramers; 4 subunits per hexamer contact DNA at a time. Coordinated motions by a converter formed by DNA-disengaged RuvB subunits stimulates ATP hydrolysis and nucleotide exchange. Immobilization of the converter enables RuvB to convert the ATP-contained energy into a lever motion, pulling 2 nucleotides of DNA out of the RuvA tetramer per ATP hydrolyzed, thus driving DNA branch migration. The RuvB motors rotate together with the DNA substrate, which together with the progressing nucleotide cycle form the mechanistic basis for DNA recombination by continuous HJ branch migration. Branch migration allows RuvC to scan DNA until it finds its consensus sequence, where it cleaves and resolves cruciform DNA. This is Holliday junction branch migration complex subunit RuvB from Rhizorhabdus wittichii (strain DSM 6014 / CCUG 31198 / JCM 15750 / NBRC 105917 / EY 4224 / RW1) (Sphingomonas wittichii).